Consider the following 198-residue polypeptide: Protein uvp1 (198 aa).

One can recognise a Resolvase/invertase-type recombinase catalytic domain in the interval 1 to 140 (MIIGYARKST…SGLAAARARG (140 aa)). S9 acts as the O-(5'-phospho-DNA)-serine intermediate in catalysis. Positions 168–187 (VGAVAKRFNVSRMTIYRYTT) form a DNA-binding region, H-T-H motif.

This sequence belongs to the site-specific recombinase resolvase family.

In terms of biological role, cooperates with the mucAB genes in the DNA repair process. Could be a resolvase-invertase protein. The polypeptide is Protein uvp1 (uvp1) (Escherichia coli).